Consider the following 328-residue polypeptide: Biotin synthase (328 aa).

Residues 43–272 (NVVQKASLLS…KSTVRLSAGR (230 aa)) enclose the Radical SAM core domain. Residues cysteine 58, cysteine 62, and cysteine 65 each coordinate [4Fe-4S] cluster. Cysteine 103, cysteine 135, cysteine 195, and arginine 267 together coordinate [2Fe-2S] cluster.

It belongs to the radical SAM superfamily. Biotin synthase family. In terms of assembly, homodimer. It depends on [4Fe-4S] cluster as a cofactor. [2Fe-2S] cluster serves as cofactor.

The enzyme catalyses (4R,5S)-dethiobiotin + (sulfur carrier)-SH + 2 reduced [2Fe-2S]-[ferredoxin] + 2 S-adenosyl-L-methionine = (sulfur carrier)-H + biotin + 2 5'-deoxyadenosine + 2 L-methionine + 2 oxidized [2Fe-2S]-[ferredoxin]. Its pathway is cofactor biosynthesis; biotin biosynthesis; biotin from 7,8-diaminononanoate: step 2/2. In terms of biological role, catalyzes the conversion of dethiobiotin (DTB) to biotin by the insertion of a sulfur atom into dethiobiotin via a radical-based mechanism. The protein is Biotin synthase of Allorhizobium ampelinum (strain ATCC BAA-846 / DSM 112012 / S4) (Agrobacterium vitis (strain S4)).